Reading from the N-terminus, the 493-residue chain is Leucine-rich repeat-containing protein 14 (493 aa).

Residues 111–146 form an LRR 1; degenerate repeat; sequence KHALRVLDMTGLLDDGVEQDPETMSMWDCTAAVART. The LRR 2; degenerate repeat unit spans residues 194–218; it reads RLCCRDLRAEDLPMRNTVALLQLLD. One copy of the LRR 3; degenerate repeat lies at 219-246; that stretch reads AGCLRRIDLRFNNLGLRGLSVIIPHVAR. One copy of the LRR 4; degenerate repeat lies at 247–282; that stretch reads FQHLASLRLHYVHGDSRQPSVDGEDNFRYFLAQMGR. 5 LRR repeats span residues 283 to 307, 308 to 339, 340 to 360, 364 to 391, and 392 to 416; these read FMCL…LSTL, QRPL…AHLK, KLDL…QGLL, ATTL…TLTR, and CASL…LLRD.

It belongs to the PRAME family. LRRC14 subfamily. Interacts with IKBKB; disrupts IKBKB-IKBKG interaction preventing I-kappa-B-kinase (IKK) core complex formation and leading to a decrease of IKBKB phosphorylation and NF-kappaB activation. Interacts with CHUK.

The protein localises to the cytoplasm. In terms of biological role, negatively regulates Toll-like receptor-mediated NF-kappa-B signaling by disrupting IKK core complex formation through interaction with IKBKB. This is Leucine-rich repeat-containing protein 14 from Mus musculus (Mouse).